Consider the following 195-residue polypeptide: UPF0301 protein Bpro_1142 (195 aa).

This sequence belongs to the UPF0301 (AlgH) family.

The chain is UPF0301 protein Bpro_1142 from Polaromonas sp. (strain JS666 / ATCC BAA-500).